The following is a 397-amino-acid chain: tRNA-specific 2-thiouridylase MnmA (397 aa).

ATP-binding positions include 19 to 26 (AMSGGVDS) and Leu45. The active-site Nucleophile is the Cys113. A disulfide bridge connects residues Cys113 and Cys210. Gly137 lines the ATP pocket. The segment at 160 to 162 (RDQ) is interaction with tRNA. Residue Cys210 is the Cysteine persulfide intermediate of the active site.

It belongs to the MnmA/TRMU family.

The protein localises to the cytoplasm. It carries out the reaction S-sulfanyl-L-cysteinyl-[protein] + uridine(34) in tRNA + AH2 + ATP = 2-thiouridine(34) in tRNA + L-cysteinyl-[protein] + A + AMP + diphosphate + H(+). Catalyzes the 2-thiolation of uridine at the wobble position (U34) of tRNA, leading to the formation of s(2)U34. The protein is tRNA-specific 2-thiouridylase MnmA of Rhodopseudomonas palustris (strain ATCC BAA-98 / CGA009).